A 60-amino-acid polypeptide reads, in one-letter code: uncharacterized protein (60 aa).

The helical transmembrane segment at 19-39 (LSIMCGCSIYFLLLVFILTFY) threads the bilayer.

Its subcellular location is the membrane. This is an uncharacterized protein from Saccharomyces cerevisiae (strain ATCC 204508 / S288c) (Baker's yeast).